A 273-amino-acid chain; its full sequence is (5R)-carbapenem-3-carboxylate synthase (273 aa).

Fe cation contacts are provided by His-101 and Asp-103. Residue Gly-104 coordinates substrate. Thr-130 is a binding site for 2-oxoglutarate. A Fe cation-binding site is contributed by His-251. Residues Arg-253, Arg-263, and Arg-267 each coordinate 2-oxoglutarate.

It belongs to the TfdA dioxygenase family. As to quaternary structure, homohexamer. Dimer of trimers. Requires Fe(2+) as cofactor.

The protein resides in the cytoplasm. It carries out the reaction (3S,5S)-carbapenam-3-caboxylate + 2-oxoglutarate + O2 = (5R)-carbapenem-3-carboxylate + succinate + CO2 + H2O. Inhibited by L-N-acetylproline and by D-N-acetylproline. Functionally, catalyzes the Fe(2+) and alpha-ketoglutarate-dependent conversion of (3S,5S)-carbapenam to (5R)-carbapenem, an essential step in carbapenem antibiotic biosynthesis. This is (5R)-carbapenem-3-carboxylate synthase (carC) from Pectobacterium carotovorum subsp. carotovorum (Erwinia carotovora subsp. carotovora).